Consider the following 503-residue polypeptide: uncharacterized protein (503 aa).

ABC transporter domains follow at residues 8 to 249 and 261 to 499; these read VPVA…LGRD and IVDQ…MSAI. 43–50 serves as a coordination point for ATP; it reads GKNGAGKS.

The protein belongs to the ABC transporter superfamily.

Probably part of a binding-protein-dependent transport system YphDEF. Probably responsible for energy coupling to the transport system. This is an uncharacterized protein from Escherichia coli (strain K12).